A 440-amino-acid polypeptide reads, in one-letter code: MAGVSPAVFGCPDVTLGRNTAVREVQENVTSVDSLTLVSSNTDFAFSLYRKLVLKNPDENVVFSPFSICTALALLSLGAKSNTLKEILEGLKFNLTETPEPDIHQGFRYLLDLLSQPGNQVQISTGSALFIEKHLQILAEFKEKARALYQAEAFTADFQQPLKATKLINDYVSNHTQGKIKELISGLKESTLMVLVNYIYFKGKWKNPFDPNDTFKSEFYLDEKRSVIVSMMKTGYLTTPYFRDEELSCTVVELKYTGNASAMFILPDQGRMQQVEASLQPETLRKWKNSLKPRMIHELRLPKFSISTDYSLEHILPELGIREVFSTQADLSAITGTKDLRVSQVVHKAVLDVAETGTEAAAATGMAGVGCCAVFDFLEIFFNRPFLMIISDTKAHIALFMAKVTNPERSMNFPNGEGASSQRLESKRLCFGDPLCLIGQ.

The tract at residues 357–382 (GTEAAAATGMAGVGCCAVFDFLEIFF) is RCL.

Belongs to the serpin family. In terms of tissue distribution, expressed in bone marrow (particularly hematopoietic stem cells), heart, kidney, liver, lung, skeletal muscle, spleen, testis, thymus and T-cells.

It is found in the cytoplasm. Its subcellular location is the nucleus. Functionally, serine and cysteine protease inhibitor. Can inhibit lysosomal papain-like proteases including the cathepsins B, G, H, K, L and V. Ineffective against elastase, granzyme A, granzyme B, or caspases 3, 8 or 9. Inhibition of cytoplasmic cathepsin B following release from the lysosome may protect cells from apoptosis. This may facilitate the survival of progenitor T-cells and the subsequent development of long term memory CD8 T-cells. This chain is Serine protease inhibitor A3G (Serpina3g), found in Mus musculus (Mouse).